The chain runs to 315 residues: Carbamate kinase (315 aa).

Belongs to the carbamate kinase family. Homodimer.

Its subcellular location is the cytoplasm. The catalysed reaction is hydrogencarbonate + NH4(+) + ATP = carbamoyl phosphate + ADP + H2O + H(+). In Thermococcus kodakarensis (strain ATCC BAA-918 / JCM 12380 / KOD1) (Pyrococcus kodakaraensis (strain KOD1)), this protein is Carbamate kinase (cpkA).